We begin with the raw amino-acid sequence, 194 residues long: Accessory gene regulator protein B (194 aa).

5 consecutive transmembrane segments (helical) span residues 44–64, 80–100, 107–127, 142–162, and 163–183; these read IVVYGLAIIFHTFFYTLLTHL, SSLLCHIQNIIFFIIFPYLII, FVLLSMALVGLIITILYAPAA, KILSIFLYCTIVVISLVTKEP, and VNKLILFGVILESLTLLPIFF.

The protein belongs to the AgrB family.

Its subcellular location is the cell membrane. Functionally, essential for the production of a quorum sensing system signal molecule, the autoinducing peptide (AIP). This quorum sensing system is responsible for the regulation of the expression of virulence factor genes. Involved in the proteolytic processing of AgrD, the precursor of AIP. This is Accessory gene regulator protein B from Staphylococcus epidermidis.